Consider the following 661-residue polypeptide: Kyphoscoliosis peptidase (661 aa).

Residues 116-137 (GDKNGNMRPRQPGGKDAHAYPW) form a disordered region. Active-site residues include C225, H267, and D282.

It belongs to the transglutaminase-like superfamily. As to quaternary structure, interacts with IGFN1 and FLNC. In terms of tissue distribution, specifically expressed in skeletal and cardiac muscle.

The protein resides in the cytoplasm. The protein localises to the cytoskeleton. It localises to the myofibril. Its subcellular location is the sarcomere. It is found in the z line. Functionally, probable cytoskeleton-associated protease required for normal muscle growth. Involved in function, maturation and stabilization of the neuromuscular junction. May act by cleaving muscle-specific proteins such as FLNC. The polypeptide is Kyphoscoliosis peptidase (Mus musculus (Mouse)).